The following is a 330-amino-acid chain: Complement factor H-related protein 3 (330 aa).

A signal peptide spans 1-18 (MLLLINVILTLWVSCANG). 5 consecutive Sushi domains span residues 22-84 (PCDF…VPCL), 85-142 (RKCY…RCIR), 144-205 (RTCS…ICIN), 208-266 (EKCG…RCIH), and 267-330 (PCII…PRCE). Disulfide bonds link Cys-23–Cys-72, Cys-55–Cys-83, Cys-87–Cys-129, Cys-114–Cys-140, Cys-146–Cys-192, and Cys-175–Cys-203. An N-linked (GlcNAc...) asparagine glycan is attached at Asn-108. N-linked (GlcNAc...) asparagine glycosylation is found at Asn-185 and Asn-205. 4 disulfides stabilise this stretch: Cys-210-Cys-253, Cys-239-Cys-264, Cys-268-Cys-319, and Cys-302-Cys-329. The N-linked (GlcNAc...) asparagine glycan is linked to Asn-309.

In terms of tissue distribution, expressed by the liver and secreted in plasma.

The protein localises to the secreted. In terms of biological role, might be involved in complement regulation. The sequence is that of Complement factor H-related protein 3 (CFHR3) from Homo sapiens (Human).